The sequence spans 128 residues: Large ribosomal subunit protein bL20c (128 aa).

Belongs to the bacterial ribosomal protein bL20 family.

Its subcellular location is the plastid. Functionally, binds directly to 23S ribosomal RNA and is necessary for the in vitro assembly process of the 50S ribosomal subunit. It is not involved in the protein synthesizing functions of that subunit. The chain is Large ribosomal subunit protein bL20c (rpl20) from Lathraea clandestina (Purple toothwort).